The sequence spans 293 residues: Glutamyl-Q tRNA(Asp) synthetase (293 aa).

L-glutamate-binding positions include 26–30 (RFAPS) and Asp-62. Residues 29–39 (PSPTGLLHLGN) carry the 'HIGH' region motif. The Zn(2+) site is built by Cys-118, Cys-120, Tyr-131, and Cys-135. L-glutamate contacts are provided by Tyr-178 and Arg-196. Positions 234–238 (KLSKR) match the 'KMSKS' region motif. Lys-237 contributes to the ATP binding site.

Belongs to the class-I aminoacyl-tRNA synthetase family. GluQ subfamily. The cofactor is Zn(2+).

Catalyzes the tRNA-independent activation of glutamate in presence of ATP and the subsequent transfer of glutamate onto a tRNA(Asp). Glutamate is transferred on the 2-amino-5-(4,5-dihydroxy-2-cyclopenten-1-yl) moiety of the queuosine in the wobble position of the QUC anticodon. The polypeptide is Glutamyl-Q tRNA(Asp) synthetase (Synechococcus sp. (strain CC9605)).